The sequence spans 602 residues: Glutaminase liver isoform, mitochondrial (602 aa).

Residues 1-14 constitute a mitochondrion transit peptide; sequence MRSMRALQNALSRA. Disordered regions lie at residues 1 to 28 and 46 to 67; these read MRSMRALQNALSRAGSHGQRGGWGHPSR and QGRGTPHSHQPQHSDHDASNSG. Ser-219 is a binding site for substrate. The residue at position 253 (Lys-253) is an N6-succinyllysine. Asn-268 lines the substrate pocket. N6-acetyllysine is present on residues Lys-279 and Lys-284. Substrate contacts are provided by Glu-314 and Asn-321. At Lys-329 the chain carries N6-acetyllysine. The substrate site is built by Tyr-347, Tyr-399, and Val-417. ANK repeat units lie at residues 518–551 and 552–585; these read DSRTALHVAAAEGHIDVVKFLIEACKVNPFVKDR and WGNIPLDDAVQFNHLEVVKLLQDYHDSYMLSETQ.

The protein belongs to the glutaminase family. Homotetramer, dimer of dimers. Does not assemble into higher oligomers. Interacts with the PDZ domain of the syntrophin SNTA1. Interacts with the PDZ domain of TAX1BP3. In terms of tissue distribution, liver specific.

The protein resides in the mitochondrion. The catalysed reaction is L-glutamine + H2O = L-glutamate + NH4(+). Functionally, plays an important role in the regulation of glutamine catabolism. Promotes mitochondrial respiration and increases ATP generation in cells by catalyzing the synthesis of glutamate and alpha-ketoglutarate. Increases cellular anti-oxidant function via NADH and glutathione production. May play a role in preventing tumor proliferation. This is Glutaminase liver isoform, mitochondrial (Gls2) from Rattus norvegicus (Rat).